Consider the following 148-residue polypeptide: Truncated transcription factor CAULIFLOWER C (148 aa).

The MADS-box domain maps to 1–61 (MGRGRVEMKR…GKLFEYSSES (61 aa)). The region spanning 90–148 (QTNWSMEYSRLKAKIELWERNQRHYLGEDLESISIKELQNLEQQLDTSLKHIPSRKVCK) is the K-box; partial domain.

In terms of assembly, homodimer capable of binding to CArG-box sequences.

It is found in the nucleus. Probable transcription factor that promotes early floral meristem identity in synergy with APETALA1, FRUITFULL and LEAFY. Is required subsequently for the transition of an inflorescence meristem into a floral meristem. Seems to be partially redundant to the function of APETALA1. This Brassica oleracea var. botrytis (Cauliflower) protein is Truncated transcription factor CAULIFLOWER C (CAL-C).